The following is a 544-amino-acid chain: Fructose dehydrogenase large subunit (544 aa).

Residue 14–30 (GAGICGSLLAHKLVRNG) participates in FAD binding. Histidine 478 acts as the Proton acceptor in catalysis.

The protein belongs to the GMC oxidoreductase family. In terms of assembly, heterotrimer composed of FdhL, FdhS and FdhC. It depends on FAD as a cofactor.

It localises to the cell membrane. The catalysed reaction is keto-D-fructose + a ubiquinone = 5-dehydro-D-fructose + a ubiquinol. Its function is as follows. Catalytic subunit of fructose dehydrogenase, an enzyme that catalyzes the oxidation of D-fructose to produce 5-keto-D-fructose. The polypeptide is Fructose dehydrogenase large subunit (fdhL) (Gluconobacter japonicus).